The chain runs to 71 residues: Beta-defensin 10 (71 aa).

The first 23 residues, 1–23, serve as a signal peptide directing secretion; that stretch reads MKTLCSLLLIGCLLFSYDTPVVG. 3 disulfide bridges follow: Cys37/Cys66, Cys44/Cys59, and Cys49/Cys67.

Belongs to the beta-defensin family.

Its subcellular location is the secreted. Has antibacterial activity. In Rattus norvegicus (Rat), this protein is Beta-defensin 10 (Defb10).